The following is a 492-amino-acid chain: Cytochrome P450 monooxygenase MYCFIDRAFT_204672 (492 aa).

An N-linked (GlcNAc...) asparagine glycan is attached at N116. Residues 269–293 (FLISMIFISAANGCVVSGAMLYSIA) form a helical membrane-spanning segment. N335 is a glycosylation site (N-linked (GlcNAc...) asparagine). A heme-binding site is contributed by C430.

Belongs to the cytochrome P450 family. Heme is required as a cofactor.

It localises to the membrane. Its pathway is secondary metabolite biosynthesis. Functionally, cytochrome P450 monooxygenase; part of the gene cluster that mediates the biosynthesis of an emodin derivative that may be involved in black Sigatoka disease of banana. The pathway begins with the synthesis of atrochrysone thioester by the polyketide synthase PKS8-1. The atrochrysone carboxyl ACP thioesterase MYCFIDRAFT_190111 then breaks the thioester bond and releases the atrochrysone carboxylic acid from PKS8-1. The decarboxylase MYCFIDRAFT_34057 then catalyzes the concerted decarboxylation-elimination required to convert atochrysone carboxylic acid into emodin anthrone, which is further oxidized to emodin by the anthrone oxygenase MYCFIDRAFT_34418. The functions of the other tailoring enzymes as well as the final product of the cluster have still to be identified. The sequence is that of Cytochrome P450 monooxygenase MYCFIDRAFT_204672 from Pseudocercospora fijiensis (strain CIRAD86) (Black leaf streak disease fungus).